A 148-amino-acid chain; its full sequence is Nucleoside diphosphate kinase 1 (148 aa).

ATP-binding residues include lysine 9, phenylalanine 57, arginine 85, threonine 91, arginine 102, and asparagine 112. The active-site Pros-phosphohistidine intermediate is the histidine 115.

Belongs to the NDK family. Mg(2+) is required as a cofactor.

It catalyses the reaction a 2'-deoxyribonucleoside 5'-diphosphate + ATP = a 2'-deoxyribonucleoside 5'-triphosphate + ADP. It carries out the reaction a ribonucleoside 5'-diphosphate + ATP = a ribonucleoside 5'-triphosphate + ADP. In terms of biological role, major role in the synthesis of nucleoside triphosphates other than ATP. The ATP gamma phosphate is transferred to the NDP beta phosphate via a ping-pong mechanism, using a phosphorylated active-site intermediate. The polypeptide is Nucleoside diphosphate kinase 1 (Nicotiana tabacum (Common tobacco)).